The sequence spans 565 residues: Periplasmic trehalase (565 aa).

The N-terminal stretch at Met-1–Ala-30 is a signal peptide. Residues Arg-152, Trp-159–Asp-160, Asn-196, Arg-205–Gln-207, Arg-277–Glu-279, and Gly-310 each bind substrate. Active-site proton donor/acceptor residues include Asp-312 and Glu-496. Glu-511 contacts substrate. The disordered stretch occupies residues Pro-538–Pro-565. The span at Thr-548–Pro-565 shows a compositional bias: polar residues.

It belongs to the glycosyl hydrolase 37 family. In terms of assembly, monomer.

The protein resides in the periplasm. It carries out the reaction alpha,alpha-trehalose + H2O = alpha-D-glucose + beta-D-glucose. Functionally, provides the cells with the ability to utilize trehalose at high osmolarity by splitting it into glucose molecules that can subsequently be taken up by the phosphotransferase-mediated uptake system. This Escherichia coli O139:H28 (strain E24377A / ETEC) protein is Periplasmic trehalase.